Consider the following 414-residue polypeptide: Multifunctional CCA protein (414 aa).

ATP-binding residues include glycine 8 and arginine 11. Positions 8 and 11 each coordinate CTP. Residues aspartate 21 and aspartate 23 each coordinate Mg(2+). Positions 91, 137, and 140 each coordinate ATP. CTP is bound by residues arginine 91, arginine 137, and arginine 140. Positions 228–329 (TGIHTLLTLA…LKLLDTIDVW (102 aa)) constitute an HD domain.

This sequence belongs to the tRNA nucleotidyltransferase/poly(A) polymerase family. Bacterial CCA-adding enzyme type 1 subfamily. In terms of assembly, monomer. Can also form homodimers and oligomers. Requires Mg(2+) as cofactor. It depends on Ni(2+) as a cofactor.

It carries out the reaction a tRNA precursor + 2 CTP + ATP = a tRNA with a 3' CCA end + 3 diphosphate. It catalyses the reaction a tRNA with a 3' CCA end + 2 CTP + ATP = a tRNA with a 3' CCACCA end + 3 diphosphate. Its function is as follows. Catalyzes the addition and repair of the essential 3'-terminal CCA sequence in tRNAs without using a nucleic acid template. Adds these three nucleotides in the order of C, C, and A to the tRNA nucleotide-73, using CTP and ATP as substrates and producing inorganic pyrophosphate. tRNA 3'-terminal CCA addition is required both for tRNA processing and repair. Also involved in tRNA surveillance by mediating tandem CCA addition to generate a CCACCA at the 3' terminus of unstable tRNAs. While stable tRNAs receive only 3'-terminal CCA, unstable tRNAs are marked with CCACCA and rapidly degraded. The chain is Multifunctional CCA protein from Edwardsiella ictaluri (strain 93-146).